A 620-amino-acid chain; its full sequence is 1-deoxy-D-xylulose-5-phosphate synthase (620 aa).

Residues His-80 and 121 to 123 each bind thiamine diphosphate; that span reads GHS. Asp-152 contacts Mg(2+). Residues 153–154, Asn-181, Tyr-288, and Glu-370 each bind thiamine diphosphate; that span reads GA. A Mg(2+)-binding site is contributed by Asn-181.

Belongs to the transketolase family. DXPS subfamily. Homodimer. Mg(2+) is required as a cofactor. Thiamine diphosphate serves as cofactor.

It carries out the reaction D-glyceraldehyde 3-phosphate + pyruvate + H(+) = 1-deoxy-D-xylulose 5-phosphate + CO2. It functions in the pathway metabolic intermediate biosynthesis; 1-deoxy-D-xylulose 5-phosphate biosynthesis; 1-deoxy-D-xylulose 5-phosphate from D-glyceraldehyde 3-phosphate and pyruvate: step 1/1. Catalyzes the acyloin condensation reaction between C atoms 2 and 3 of pyruvate and glyceraldehyde 3-phosphate to yield 1-deoxy-D-xylulose-5-phosphate (DXP). The chain is 1-deoxy-D-xylulose-5-phosphate synthase from Escherichia coli O7:K1 (strain IAI39 / ExPEC).